The chain runs to 388 residues: MNLHEYQAKQIFAQYRLPVSKGIVCHSLDDAVSAIHTLAGDTWAAKCQVHAGGRGKAGGVKLVRSEAEIREFCNQWLGQRLVTFQTDKNGQPVNTIYLEETCLIERELYLGAVIDRSSQKIVFMASNAGGMNIEDVAAQTPELIHKATIDPLTGAQAFQGRELAFKLGLSGDQIKQFAHLFVQLAKLFIEKDLALLEVNPLVLTKQGQLLCLDAKMVIDSNALYRHPELKALQDPSQEDAREADAAKWDLNYVALDGNIGCMVNGAGLAMGTMDIVKLHGGRPANFLDVGGGATKERVSEAFKLILSDQNVKAVLVNIFGGIVRCDLIAEGIIAAVNEVGINIPVIVRLEGTNAELGREILANSGLRLIAANTLTQAAQLAVKAAEGK.

Residues Lys-46, 53–55, Glu-99, Cys-102, and Glu-107 each bind ATP; that span reads GRG. Asn-199 and Asp-213 together coordinate Mg(2+). Residues Asn-264 and 321 to 323 each bind substrate; that span reads GIV.

This sequence belongs to the succinate/malate CoA ligase beta subunit family. In terms of assembly, heterotetramer of two alpha and two beta subunits. Mg(2+) serves as cofactor.

The enzyme catalyses succinate + ATP + CoA = succinyl-CoA + ADP + phosphate. It carries out the reaction GTP + succinate + CoA = succinyl-CoA + GDP + phosphate. Its pathway is carbohydrate metabolism; tricarboxylic acid cycle; succinate from succinyl-CoA (ligase route): step 1/1. Functionally, succinyl-CoA synthetase functions in the citric acid cycle (TCA), coupling the hydrolysis of succinyl-CoA to the synthesis of either ATP or GTP and thus represents the only step of substrate-level phosphorylation in the TCA. The beta subunit provides nucleotide specificity of the enzyme and binds the substrate succinate, while the binding sites for coenzyme A and phosphate are found in the alpha subunit. The sequence is that of Succinate--CoA ligase [ADP-forming] subunit beta from Actinobacillus pleuropneumoniae serotype 5b (strain L20).